Reading from the N-terminus, the 334-residue chain is MRFEEFKYVRKGVIVGLLIMLLYIIWPFIDVLAYSCAFAYMALPVYNILRKKFNKTISAGLAISIYILPIMTITIYALLTFMEIILSFNTKSIEPYINEILSIYNSFMLERIINNEQIIAKYIDEFIKYLVSQFSGKIIDVGYLIVKVIMVLFLTFYFLRDGDKAKNLIISFVPDEYKEKMRIYLSYLHDSYKNLFISCVSLSIIITILSYIGYLILGVPYAELFAIITGIFALLPILGGWMVYISIAIYFFLIHDYTKAVFMFIYGELFLSIAPDFVIRPYLVKKEVDIHPVLVVIAFLMAPLSLGLSGFAIGPLVVGALNAFYLAKYRDKKI.

7 helical membrane passes run 13-33 (VIVGLLIMLLYIIWPFIDVLA), 61-81 (LAISIYILPIMTITIYALLTF), 138-158 (IIDVGYLIVKVIMVLFLTFYF), 191-211 (SYKNLFISCVSLSIIITILSY), 234-254 (LLPILGGWMVYISIAIYFFLI), 259-279 (KAVFMFIYGELFLSIAPDFVI), and 293-313 (VLVVIAFLMAPLSLGLSGFAI).

This sequence belongs to the autoinducer-2 exporter (AI-2E) (TC 2.A.86) family.

Its subcellular location is the cell membrane. The chain is Putative transport protein MJ1177 from Methanocaldococcus jannaschii (strain ATCC 43067 / DSM 2661 / JAL-1 / JCM 10045 / NBRC 100440) (Methanococcus jannaschii).